Here is a 224-residue protein sequence, read N- to C-terminus: Heme response regulator HssR (224 aa).

A Response regulatory domain is found at 3–116 (QCLVVDDDPR…ELIFRIRAVL (114 aa)). 4-aspartylphosphate is present on aspartate 52. Positions 124–222 (NSEMTIGNLT…VRGQGYKVEN (99 aa)) form a DNA-binding region, ompR/PhoB-type.

Phosphorylated by HssS.

The protein resides in the cytoplasm. In terms of biological role, member of the two-component regulatory system HssS/HssR involved in intracellular heme homeostasis and tempering of staphylococcal virulence. Phosphorylated HssR binds to a direct repeat sequence within hrtAB promoter and activates the expression of hrtAB, an efflux pump, in response to extracellular heme, hemin, hemoglobin or blood. This is Heme response regulator HssR (hssR) from Staphylococcus aureus (strain COL).